A 230-amino-acid chain; its full sequence is MTKHQFKLSDPRLLSRIGYQFKQPELLQLALTHRSVSHKYNYERLEFLGDSLLGMIIANYLYHAYPHENEGRLTRMRATLVRQEALGKIATDLQLSRCLILSTGELKSGGHHRESILADTVEAIIGAIYLDSSDLNLLKDIVLKWYTPYLDHIEPTDQLKDPKSRLQEYLQARKKPLPVYEVVDIQGDAPHQHFKVECLVDGLSKIHGEGASRRFAEQAAAAEILKLLEQ.

In terms of domain architecture, RNase III spans 10–133; that stretch reads DPRLLSRIGY…IIGAIYLDSS (124 aa). E46 contributes to the Mg(2+) binding site. D50 is an active-site residue. Residues D119 and E122 each coordinate Mg(2+). The active site involves E122. The 70-residue stretch at 161 to 230 folds into the DRBM domain; that stretch reads DPKSRLQEYL…AAEILKLLEQ (70 aa).

The protein belongs to the ribonuclease III family. In terms of assembly, homodimer. The cofactor is Mg(2+).

Its subcellular location is the cytoplasm. It carries out the reaction Endonucleolytic cleavage to 5'-phosphomonoester.. Functionally, digests double-stranded RNA. Involved in the processing of primary rRNA transcript to yield the immediate precursors to the large and small rRNAs (23S and 16S). Processes some mRNAs, and tRNAs when they are encoded in the rRNA operon. Processes pre-crRNA and tracrRNA of type II CRISPR loci if present in the organism. The chain is Ribonuclease 3 from Acinetobacter baumannii (strain SDF).